A 125-amino-acid polypeptide reads, in one-letter code: RutC family protein STK_08110 (125 aa).

This sequence belongs to the RutC family.

In Sulfurisphaera tokodaii (strain DSM 16993 / JCM 10545 / NBRC 100140 / 7) (Sulfolobus tokodaii), this protein is RutC family protein STK_08110.